Reading from the N-terminus, the 206-residue chain is Sperm acrosome developmental regulator (206 aa).

Positions 180-206 are disordered; the sequence is RRHHVRCHAAPRPNPAQSLKLDAQSPL.

Expressed in sperm (at protein level).

The protein resides in the cytoplasmic vesicle. Its subcellular location is the secretory vesicle. The protein localises to the acrosome. In terms of biological role, may play a role in acrosome formation and nucleus shaping during spermiogenesis. This is Sperm acrosome developmental regulator from Homo sapiens (Human).